Reading from the N-terminus, the 79-residue chain is Conotoxin ArMSGL-0124 (79 aa).

Positions 1–20 (MSRLGIMVLTLLLLVYMATS) are cleaved as a signal peptide. Positions 21–44 (HQDAGEKQATQRDAINFRWKRSLT) are excised as a propeptide. 3 disulfide bridges follow: Cys-52-Cys-64, Cys-56-Cys-73, and Cys-63-Cys-77. Leu-78 bears the Leucine amide mark.

This sequence belongs to the conotoxin O3 superfamily. Expressed by the venom duct.

It is found in the secreted. The sequence is that of Conotoxin ArMSGL-0124 from Conus arenatus (Sand-dusted cone).